Reading from the N-terminus, the 132-residue chain is Small ribosomal subunit protein uS8 (132 aa).

This sequence belongs to the universal ribosomal protein uS8 family. As to quaternary structure, part of the 30S ribosomal subunit. Contacts proteins S5 and S12.

Functionally, one of the primary rRNA binding proteins, it binds directly to 16S rRNA central domain where it helps coordinate assembly of the platform of the 30S subunit. This chain is Small ribosomal subunit protein uS8, found in Enterococcus faecalis (strain ATCC 700802 / V583).